The primary structure comprises 227 residues: DNA packaging ATPase P9 (227 aa).

16 to 23 (GKTGTGKT) lines the ATP pocket.

In terms of assembly, heterodimer of P6 and P9; further multimerizes as hexamers of heterodimers. Part of the dodecameric portal complex that is composed of the packaging efficiency factor P6, the DNA packaging ATPase P9, and the internal heterododecamer P20/P22 which spans the virion inner membrane.

It localises to the virion. In terms of biological role, together with the packaging efficiency factor P6, forms the external part of the portal vertex that is embeded in the capsid and which plays critical roles in genome packaging and genome ejection. Both proteins multimerize as a single ring-shaped heterdodecamer arranged around a central channel. The protein is DNA packaging ATPase P9 (IX) of Enterobacteria phage PRD1 (Bacteriophage PRD1).